A 117-amino-acid polypeptide reads, in one-letter code: Ig heavy chain V region RF (117 aa).

A signal peptide spans 1–19 (MNFGLRLIFLVLVLKGVLC). The segment at 20–49 (DVKLVESGGGLVKLGGSLKLSCAASGFTFS) is framework-1. Cys41 and Cys115 are oxidised to a cystine. The segment at 50 to 54 (SYYMS) is complementarity-determining-1. Positions 55–68 (WVRQTPEKRLELVA) are framework-2. Residues 69–85 (AINSNGGSTYYPDTVKG) are complementarity-determining-2. The tract at residues 86 to 117 (RFTISRDNAKNTLYLQMSSLKSEDTALYYCAR) is framework-3.

The polypeptide is Ig heavy chain V region RF (Mus musculus (Mouse)).